The chain runs to 491 residues: E3 ubiquitin-protein ligase Hakai (491 aa).

Disordered regions lie at residues 1–20 and 33–61; these read MDHT…LGGL and KQAS…GDEE. The segment at 109–149 adopts an RING-type zinc-finger fold; that stretch reads CDKCGLPIKVYGRMIPCKHVFCYDCAILHEKKGDKMCPGCS. Positions 148–206 are HYB domain; it reads CSDPVQRIEQCTRGSLFMCSIVQGCKRTYLSQRDLQAHINHRHMRAGKPVTRASLENVH. Residues 164 to 190 form a C2H2-type zinc finger; that stretch reads FMCSIVQGCKRTYLSQRDLQAHINHRH. A phosphoserine mark is found at serine 201, serine 285, and serine 290. Positions 255-491 are disordered; that stretch reads QPHEDIRAPP…DQTRYRPYYQ (237 aa). Composition is skewed to pro residues over residues 342–359, 372–389, and 399–423; these read APPP…PHPP, APPP…PPPG, and MNHP…PPHH. Over residues 427–442 the composition is skewed to polar residues; that stretch reads NSLPQFTEDQGTLSPP. A compositionally biased stretch (pro residues) spans 457 to 478; that stretch reads PRGPPPPPRMQGPPSQTPLPGP.

It belongs to the Hakai family. Homodimer. Interacts with tyrosine-phosphorylated SRC substrates. Component of the WMM complex, a N6-methyltransferase complex composed of a catalytic subcomplex, named MAC, and of an associated subcomplex, named MACOM. The MAC subcomplex is composed of METTL3 and METTL14. The MACOM subcomplex is composed of WTAP, ZC3H13, CBLL1/HAKAI, VIRMA, and, in some cases of RBM15 (RBM15 or RBM15B). Also a component of a MACOM-like complex, named WTAP complex, composed of WTAP, ZC3H13, CBLL1, VIRMA, RBM15, BCLAF1 and THRAP3. Post-translationally, phosphorylated on tyrosine residues. In terms of tissue distribution, detected in heart, brain, spleen, lung, liver, skeletal muscle, kidney and testis.

It localises to the nucleus speckle. Its subcellular location is the nucleus. The protein resides in the nucleoplasm. The protein localises to the cytoplasm. The catalysed reaction is S-ubiquitinyl-[E2 ubiquitin-conjugating enzyme]-L-cysteine + [acceptor protein]-L-lysine = [E2 ubiquitin-conjugating enzyme]-L-cysteine + N(6)-ubiquitinyl-[acceptor protein]-L-lysine.. It functions in the pathway protein modification; protein ubiquitination. In terms of biological role, E3 ubiquitin-protein ligase that mediates ubiquitination of several tyrosine-phosphorylated Src substrates, including CDH1, CTTN and DOK1. Targets CDH1 for endocytosis and degradation. Associated component of the WMM complex, a complex that mediates N6-methyladenosine (m6A) methylation of RNAs, a modification that plays a role in the efficiency of mRNA splicing and RNA processing. Its function in the WMM complex is unknown. The protein is E3 ubiquitin-protein ligase Hakai of Mus musculus (Mouse).